Reading from the N-terminus, the 1376-residue chain is Zinc finger MYM-type protein 2 (1376 aa).

The segment covering 30-53 (NVGNSFSGPPNPLVSRSSKFQNSS) has biased composition (polar residues). 2 disordered regions span residues 30–56 (NVGN…SVED) and 85–158 (TSSK…FSSS). Residues Lys48, Lys88, Lys98, and Lys104 each participate in a glycyl lysine isopeptide (Lys-Gly) (interchain with G-Cter in SUMO2) cross-link. Polar residues predominate over residues 127-138 (TNQGQEKSSSNF). Basic and acidic residues predominate over residues 139–152 (IERRPSETKNRTND). Glycyl lysine isopeptide (Lys-Gly) (interchain with G-Cter in SUMO2) cross-links involve residues Lys147, Lys253, and Lys297. Residues 269–304 (DVFQNGESAPHHNPDSWISQSASFPRNQKQQGVDSL) are disordered. A compositionally biased stretch (polar residues) spans 284–302 (SWISQSASFPRNQKQQGVD). Residue Ser305 is modified to Phosphoserine. Glycyl lysine isopeptide (Lys-Gly) (interchain with G-Cter in SUMO2) cross-links involve residues Lys312, Lys324, Lys347, and Lys365. An MYM-type 1 zinc finger spans residues 326 to 362 (VKVTCANCKKPLQKGQTAYQRKGSAHLFCSTTCLSSF). The MYM-type 2 zinc finger occupies 368-408 (PKKLCVMCKKDITTMKGTIVAQVDSSESFQEFCSTSCLSLY). Residues Lys416, Lys440, Lys490, Lys502, Lys512, Lys528, and Lys531 each participate in a glycyl lysine isopeptide (Lys-Gly) (interchain with G-Cter in SUMO2) cross-link. MYM-type zinc fingers lie at residues 420 to 455 (NKSR…FNRY) and 462 to 501 (IMNC…VTEY). Residues 532–569 (LTTCTGCRTQCRFFDMTQCIGPNGYMEPYCSTACMNSH) form an MYM-type 5 zinc finger. Residues Lys575, Lys602, Lys648, Lys657, Lys687, Lys699, and Lys708 each participate in a glycyl lysine isopeptide (Lys-Gly) (interchain with G-Cter in SUMO2) cross-link. An MYM-type 6 zinc finger spans residues 635–670 (QLKCNYCKNSFCSKPEILEWENKVHQFCSKTCSDDY). 2 consecutive MYM-type zinc fingers follow at residues 722-757 (RCVT…CKKF) and 763-798 (KAAR…LLRF). Glycyl lysine isopeptide (Lys-Gly) (interchain with G-Cter in SUMO2) cross-links involve residues Lys763, Lys787, Lys811, and Lys828. Ser837 bears the Phosphoserine mark. A disordered region spans residues 1027 to 1063 (VFGEEYEEQPRPRSKKKGTKRKAVSGYQSHDDSSDNS). Residues 1038 to 1049 (PRSKKKGTKRKA) are compositionally biased toward basic residues. Position 1063 is a phosphoserine (Ser1063). Position 1375 is a phosphothreonine (Thr1375).

In terms of assembly, can form homodimers. May be a component of a BHC histone deacetylase complex that contains HDAC1, HDAC2, HMG20B/BRAF35, KDM1A, RCOR1/CoREST, PHF21A/BHC80, ZMYM2, ZNF217, ZMYM3, GSE1 and GTF2I. Interacts with FOXP1 and FOXP2. Low but widespread expression is detected in the developing kidney.

The protein localises to the nucleus. In terms of biological role, involved in the negative regulation of transcription. This chain is Zinc finger MYM-type protein 2 (Zmym2), found in Mus musculus (Mouse).